The sequence spans 234 residues: MDKESYDYLVKIVLAGPSGTGKSCLLQRFVKNQWDDQVSHTVGIDFASRIISVGMGNQQKRIKLQIWDTAGQEKFRSVARNYYRGAAGAVLVYDVTNKDSFEELSSWLSDIRAMAPSTICVVLAGSKSDLQNQRQVSTEEAAEFCSEKHISSAHETSSYTGSNVEECFLSVVSTIITRIELGEIDPQDQSLGIQYGDLSFRRPVHPSSTSNWWTSITNWDDLVRLERQTRSYCC.

A GTP-binding site is contributed by 16–23; the sequence is GPSGTGKS. Positions 39–47 match the Effector region motif; it reads SHTVGIDFA. 68-72 serves as a coordination point for GTP; the sequence is DTAGQ. S-geranylgeranyl cysteine attachment occurs at residues Cys233 and Cys234.

It belongs to the small GTPase superfamily. Rab family.

The protein localises to the cell membrane. The chain is GTP-binding protein ypt4 (ypt4) from Schizosaccharomyces pombe (strain 972 / ATCC 24843) (Fission yeast).